Here is a 167-residue protein sequence, read N- to C-terminus: Peptidoglycan L-alanyl-D-glutamate endopeptidase CwlK (167 aa).

Positions 1 to 26 are cleaved as a signal peptide; the sequence is MNLPAKTFVILCILFLLDLCFSYIRH.

This sequence belongs to the peptidase M15C family.

It localises to the cell membrane. Cleaves the linkage of the L-alanine-D-glutamic acid of B.subtilis cell wall. This Bacillus subtilis (strain 168) protein is Peptidoglycan L-alanyl-D-glutamate endopeptidase CwlK (cwlK).